Reading from the N-terminus, the 324-residue chain is Quinolinate synthase (324 aa).

The iminosuccinate site is built by His44 and Ser62. Position 107 (Cys107) interacts with [4Fe-4S] cluster. Residues 133 to 135 (YVN) and Ser150 contribute to the iminosuccinate site. Residue Cys192 coordinates [4Fe-4S] cluster. Residues 218–220 (HPE) and Thr235 contribute to the iminosuccinate site. Residue Cys278 coordinates [4Fe-4S] cluster.

The protein belongs to the quinolinate synthase family. Type 2 subfamily. Requires [4Fe-4S] cluster as cofactor.

The protein resides in the cytoplasm. It carries out the reaction iminosuccinate + dihydroxyacetone phosphate = quinolinate + phosphate + 2 H2O + H(+). It functions in the pathway cofactor biosynthesis; NAD(+) biosynthesis; quinolinate from iminoaspartate: step 1/1. In terms of biological role, catalyzes the condensation of iminoaspartate with dihydroxyacetone phosphate to form quinolinate. The protein is Quinolinate synthase of Leptospira interrogans serogroup Icterohaemorrhagiae serovar copenhageni (strain Fiocruz L1-130).